A 1200-amino-acid polypeptide reads, in one-letter code: Ice nucleation protein (1200 aa).

The tract at residues 176-1151 is octapeptide periodicity; that stretch reads ATYGSTLSGD…LSAGEDSILI (976 aa).

The protein belongs to the bacterial ice nucleation protein family.

The protein resides in the cell outer membrane. Ice nucleation proteins enable bacteria to nucleate crystallization in supercooled water. This is Ice nucleation protein (inaZ) from Pseudomonas syringae pv. syringae.